A 250-amino-acid chain; its full sequence is Ribosomal RNA small subunit methyltransferase J (250 aa).

Residues 96-97 (RD) and Asp168 contribute to the S-adenosyl-L-methionine site.

The protein belongs to the methyltransferase superfamily. RsmJ family.

It localises to the cytoplasm. It catalyses the reaction guanosine(1516) in 16S rRNA + S-adenosyl-L-methionine = N(2)-methylguanosine(1516) in 16S rRNA + S-adenosyl-L-homocysteine + H(+). Specifically methylates the guanosine in position 1516 of 16S rRNA. This Neisseria gonorrhoeae (strain NCCP11945) protein is Ribosomal RNA small subunit methyltransferase J.